The chain runs to 370 residues: Gametogenetin-binding protein 1 (370 aa).

Disordered regions lie at residues 26–114 (VGSK…QTLT) and 240–263 (PAAPQLALKDGLPHEEKGEREEAV). Over residues 31–49 (GSKSTNKPLTRSQPSSSWE) the composition is skewed to polar residues. The segment at 225–370 (LYKQLQKSAM…DEMGNWPPPD (146 aa)) is required for induction of mitochondrial fragmentation. Residues 250–260 (GLPHEEKGERE) show a composition bias toward basic and acidic residues. The tract at residues 298-370 (KKFRSTDTVG…DEMGNWPPPD (73 aa)) is interaction with GGN.

Interacts with CCDC159. Interacts with isoform 1 and isoform 2 of GGN. Testis-specific. In the testis, expressed only in germ cells and not in somatic cells. Expression starts in late primary spermatocytes in stage X-XII tubules and gradually increases towards step 1-3 spermatids in stage I-III tubules. Expression then declines continuously and disappears after step 7 spermatids in stage VII tubules (at protein level).

The protein localises to the cytoplasm. Its subcellular location is the membrane. The protein resides in the golgi apparatus. It is found in the mitochondrion intermembrane space. In terms of biological role, induces mitochondrial fragmentation, possibly by promoting DNM1L-dependent fission and may play a role in mitochondrial morphogenesis during spermatogenesis. The polypeptide is Gametogenetin-binding protein 1 (Ggnbp1) (Mus musculus (Mouse)).